Here is an 833-residue protein sequence, read N- to C-terminus: Leucine--tRNA ligase (833 aa).

The 'HIGH' region signature appears at 41–52 (PYPSGAGLHVGH). A 'KMSKS' region motif is present at residues 610 to 614 (KMSKS). Position 613 (Lys-613) interacts with ATP.

It belongs to the class-I aminoacyl-tRNA synthetase family.

It is found in the cytoplasm. It catalyses the reaction tRNA(Leu) + L-leucine + ATP = L-leucyl-tRNA(Leu) + AMP + diphosphate. The chain is Leucine--tRNA ligase from Streptococcus equi subsp. zooepidemicus (strain MGCS10565).